The primary structure comprises 202 residues: Recombination protein RecR (202 aa).

A C4-type zinc finger spans residues 58–73 (CANCGNLTDKKLCDIC). The Toprim domain maps to 81-178 (SVITVVEDSM…KVSRIAMGVP (98 aa)).

Belongs to the RecR family.

Its function is as follows. May play a role in DNA repair. It seems to be involved in an RecBC-independent recombinational process of DNA repair. It may act with RecF and RecO. The chain is Recombination protein RecR from Finegoldia magna (strain ATCC 29328 / DSM 20472 / WAL 2508) (Peptostreptococcus magnus).